We begin with the raw amino-acid sequence, 158 residues long: 6,7-dimethyl-8-ribityllumazine synthase (158 aa).

Residues phenylalanine 23, serine 61 to glutamate 63, and alanine 85 to isoleucine 87 each bind 5-amino-6-(D-ribitylamino)uracil. Position 90 to 91 (aspartate 90 to threonine 91) interacts with (2S)-2-hydroxy-3-oxobutyl phosphate. The Proton donor role is filled by histidine 93. Tyrosine 118 lines the 5-amino-6-(D-ribitylamino)uracil pocket. Arginine 132 serves as a coordination point for (2S)-2-hydroxy-3-oxobutyl phosphate.

The protein belongs to the DMRL synthase family.

The catalysed reaction is (2S)-2-hydroxy-3-oxobutyl phosphate + 5-amino-6-(D-ribitylamino)uracil = 6,7-dimethyl-8-(1-D-ribityl)lumazine + phosphate + 2 H2O + H(+). The protein operates within cofactor biosynthesis; riboflavin biosynthesis; riboflavin from 2-hydroxy-3-oxobutyl phosphate and 5-amino-6-(D-ribitylamino)uracil: step 1/2. Functionally, catalyzes the formation of 6,7-dimethyl-8-ribityllumazine by condensation of 5-amino-6-(D-ribitylamino)uracil with 3,4-dihydroxy-2-butanone 4-phosphate. This is the penultimate step in the biosynthesis of riboflavin. This is 6,7-dimethyl-8-ribityllumazine synthase from Prochlorococcus marinus (strain MIT 9211).